The sequence spans 355 residues: UDP-N-acetylglucosamine--N-acetylmuramyl-(pentapeptide) pyrophosphoryl-undecaprenol N-acetylglucosamine transferase (355 aa).

Residues 11 to 13 (TGG), asparagine 123, arginine 162, serine 185, isoleucine 239, 258 to 263 (ALTVSE), and glutamine 284 each bind UDP-N-acetyl-alpha-D-glucosamine.

Belongs to the glycosyltransferase 28 family. MurG subfamily.

It localises to the cell inner membrane. It catalyses the reaction di-trans,octa-cis-undecaprenyl diphospho-N-acetyl-alpha-D-muramoyl-L-alanyl-D-glutamyl-meso-2,6-diaminopimeloyl-D-alanyl-D-alanine + UDP-N-acetyl-alpha-D-glucosamine = di-trans,octa-cis-undecaprenyl diphospho-[N-acetyl-alpha-D-glucosaminyl-(1-&gt;4)]-N-acetyl-alpha-D-muramoyl-L-alanyl-D-glutamyl-meso-2,6-diaminopimeloyl-D-alanyl-D-alanine + UDP + H(+). It participates in cell wall biogenesis; peptidoglycan biosynthesis. Its function is as follows. Cell wall formation. Catalyzes the transfer of a GlcNAc subunit on undecaprenyl-pyrophosphoryl-MurNAc-pentapeptide (lipid intermediate I) to form undecaprenyl-pyrophosphoryl-MurNAc-(pentapeptide)GlcNAc (lipid intermediate II). This Hydrogenovibrio crunogenus (strain DSM 25203 / XCL-2) (Thiomicrospira crunogena) protein is UDP-N-acetylglucosamine--N-acetylmuramyl-(pentapeptide) pyrophosphoryl-undecaprenol N-acetylglucosamine transferase.